The primary structure comprises 327 residues: uncharacterized protein (327 aa).

The helical transmembrane segment at 13–33 threads the bilayer; the sequence is IICIISIIVLLLIIISLYPHK.

It localises to the membrane. This is an uncharacterized protein from Caenorhabditis elegans.